The following is a 284-amino-acid chain: Ribose-phosphate pyrophosphokinase (284 aa).

ATP is bound by residues Asp-34–Glu-36 and Arg-92–Gln-93. His-125 and Asp-163 together coordinate Mg(2+). Lys-186 is an active-site residue. Residues Arg-188, Asp-212, and Ser-216–Thr-220 contribute to the D-ribose 5-phosphate site.

The protein belongs to the ribose-phosphate pyrophosphokinase family. Class III (archaeal) subfamily. As to quaternary structure, homotetramer. The cofactor is Mg(2+).

The protein localises to the cytoplasm. It catalyses the reaction D-ribose 5-phosphate + ATP = 5-phospho-alpha-D-ribose 1-diphosphate + AMP + H(+). Its pathway is metabolic intermediate biosynthesis; 5-phospho-alpha-D-ribose 1-diphosphate biosynthesis; 5-phospho-alpha-D-ribose 1-diphosphate from D-ribose 5-phosphate (route I): step 1/1. Activated by inorganic phosphate, with a maximal activity at 190 mM. Above this concentration inorganic phosphate progressively inhibits the kinase. Completely inhibited by ADP, and partially inhibited by alpha,beta-methylene ATP (mATP). Lack of allosteric regulation. Involved in the biosynthesis of the central metabolite phospho-alpha-D-ribosyl-1-pyrophosphate (PRPP) via the transfer of pyrophosphoryl group from ATP to 1-hydroxyl of ribose-5-phosphate (Rib-5-P). It can also use dATP as diphosphoryl donor. The polypeptide is Ribose-phosphate pyrophosphokinase (Methanocaldococcus jannaschii (strain ATCC 43067 / DSM 2661 / JAL-1 / JCM 10045 / NBRC 100440) (Methanococcus jannaschii)).